A 151-amino-acid chain; its full sequence is FUN14 domain-containing protein 2 (151 aa).

The Cytoplasmic segment spans residues 1 to 42; that stretch reads MAANSQGNFDGKFEALDLAELTKKQPWWRKLFGQESGPSAEK. The chain crosses the membrane as a helical span at residues 43 to 63; sequence YSVATQLVIGGVTGWCTGFVF. Residues 64 to 69 lie on the Mitochondrial intermembrane side of the membrane; the sequence is QKVGKL. Residues 70–90 traverse the membrane as a helical segment; it reads AATAVGGGFFLLQLANHTGYI. Topologically, residues 91–126 are cytoplasmic; that stretch reads KVDWQRVEKDMKKAKEQLKIRKNKQIPTEVKSKAEE. A helical membrane pass occupies residues 127-147; it reads VVSFVKKNVLVTGGFFGGFLL. The Mitochondrial intermembrane segment spans residues 148-151; the sequence is GMAS.

It belongs to the FUN14 family. In terms of tissue distribution, highly expressed in platelet (at protein level). Expressed in liver, brain, heart and muscle.

Its subcellular location is the mitochondrion outer membrane. It localises to the nucleus. In terms of biological role, binds directly and specifically 1,2-Diacyl-sn-glycero-3-phospho-(1'-myo-inositol-3',4',5'-bisphosphate) (PIP3) leading to the recruitment of PIP3 to mitochondria and may play a role in the regulation of the platelet activation via AKT/GSK3B/cGMP signaling pathways. May act as transcription factor that regulates SREBP1 (isoform SREBP-1C) expression in order to modulate triglyceride (TG) homeostasis in hepatocytes. This chain is FUN14 domain-containing protein 2, found in Mus musculus (Mouse).